Reading from the N-terminus, the 305-residue chain is Glycine--tRNA ligase alpha subunit (305 aa).

The protein belongs to the class-II aminoacyl-tRNA synthetase family. As to quaternary structure, tetramer of two alpha and two beta subunits.

It localises to the cytoplasm. The enzyme catalyses tRNA(Gly) + glycine + ATP = glycyl-tRNA(Gly) + AMP + diphosphate. This Streptococcus pyogenes serotype M12 (strain MGAS2096) protein is Glycine--tRNA ligase alpha subunit.